The sequence spans 458 residues: Transcription factor ORF10 (458 aa).

Residues 38–65 (CESCRLKKLRCSGHKSGCDRCRSQAMKC) constitute a DNA-binding region (zn(2)-C6 fungal-type). The disordered stretch occupies residues 69-109 (IGAPSNSSRPKSRSHFQPNFSNMSGTAGTSKAPSPLGNDGV). The segment covering 71-100 (APSNSSRPKSRSHFQPNFSNMSGTAGTSKA) has biased composition (polar residues).

It localises to the nucleus. Transcription factor that specifically regulates the expression of the gene cluster that mediates the biosynthesis of PR-toxin, a bicyclic sesquiterpene belonging to the eremophilane class and acting as a mycotoxin. This chain is Transcription factor ORF10, found in Penicillium roqueforti (strain FM164).